The following is a 154-amino-acid chain: Large ribosomal subunit protein uL13 (154 aa).

This sequence belongs to the universal ribosomal protein uL13 family. In terms of assembly, part of the 50S ribosomal subunit.

In terms of biological role, this protein is one of the early assembly proteins of the 50S ribosomal subunit, although it is not seen to bind rRNA by itself. It is important during the early stages of 50S assembly. In Allorhizobium ampelinum (strain ATCC BAA-846 / DSM 112012 / S4) (Agrobacterium vitis (strain S4)), this protein is Large ribosomal subunit protein uL13.